The primary structure comprises 195 residues: RILP-like protein 2 (195 aa).

Residues 8–92 (SPTQAFDKDV…RTETDRVVAE (85 aa)) enclose the RH1 domain. Residues 58-149 (LEMFETMVNK…AQEELQLYKS (92 aa)) adopt a coiled-coil conformation. In terms of domain architecture, RH2 spans 115–185 (RPRFTMQELK…ITEESKEKST (71 aa)).

Belongs to the RILPL family.

Its subcellular location is the cytoplasm. It localises to the cytosol. It is found in the cytoskeleton. The protein resides in the microtubule organizing center. The protein localises to the centrosome. Its subcellular location is the cell projection. It localises to the cilium. In terms of biological role, involved in cell shape and neuronal morphogenesis, positively regulating the establishment and maintenance of dendritic spines. Plays a role in cellular protein transport. The sequence is that of RILP-like protein 2 (rilpl2) from Danio rerio (Zebrafish).